Here is an 89-residue protein sequence, read N- to C-terminus: Elongation factor 1-beta (89 aa).

This sequence belongs to the EF-1-beta/EF-1-delta family.

In terms of biological role, promotes the exchange of GDP for GTP in EF-1-alpha/GDP, thus allowing the regeneration of EF-1-alpha/GTP that could then be used to form the ternary complex EF-1-alpha/GTP/AAtRNA. The protein is Elongation factor 1-beta of Methanosarcina acetivorans (strain ATCC 35395 / DSM 2834 / JCM 12185 / C2A).